We begin with the raw amino-acid sequence, 89 residues long: Small ribosomal subunit protein uS15 (89 aa).

It belongs to the universal ribosomal protein uS15 family. As to quaternary structure, part of the 30S ribosomal subunit. Forms a bridge to the 50S subunit in the 70S ribosome, contacting the 23S rRNA.

In terms of biological role, one of the primary rRNA binding proteins, it binds directly to 16S rRNA where it helps nucleate assembly of the platform of the 30S subunit by binding and bridging several RNA helices of the 16S rRNA. Its function is as follows. Forms an intersubunit bridge (bridge B4) with the 23S rRNA of the 50S subunit in the ribosome. The protein is Small ribosomal subunit protein uS15 of Parabacteroides distasonis (strain ATCC 8503 / DSM 20701 / CIP 104284 / JCM 5825 / NCTC 11152).